Reading from the N-terminus, the 531-residue chain is Doublesex- and mab-3-related transcription factor A2 (531 aa).

A DNA-binding region (DM) is located at residues Cys69–Arg116. Positions Leu197–Pro312 are disordered. Residues Pro274–Gly285 show a composition bias toward low complexity. In terms of domain architecture, DMA spans Arg310–Gln345.

This sequence belongs to the DMRT family. Expressed in adult brain and testis, as well as in embryonic ovary, kidney, heart, lung, stomach and brain.

The protein localises to the nucleus. Functionally, may be involved in sexual development. The protein is Doublesex- and mab-3-related transcription factor A2 (Dmrta2) of Mus musculus (Mouse).